The sequence spans 197 residues: Ribonuclease HII (197 aa).

The RNase H type-2 domain occupies 10–197; sequence ELIAGVDEVG…APVRKLLNTL (188 aa). A divalent metal cation is bound by residues aspartate 16, glutamate 17, and aspartate 108.

It belongs to the RNase HII family. Mn(2+) serves as cofactor. The cofactor is Mg(2+).

The protein resides in the cytoplasm. The catalysed reaction is Endonucleolytic cleavage to 5'-phosphomonoester.. Functionally, endonuclease that specifically degrades the RNA of RNA-DNA hybrids. The chain is Ribonuclease HII (rnhB) from Pasteurella multocida (strain Pm70).